Here is a 523-residue protein sequence, read N- to C-terminus: MSNRVIIFDTTLRDGEQALAASLTVKEKLQIALSLERLGVDVMEVGFPVSSPGDFNSVQTIANTVKNSRVCALARALEKDIDAAAQSLSVADQFRIHTFISTSTIHVESKLKRSFDQVLEMAVGAVKYARRFTDDVEFSCEDAGRTPIDNLCRMVEEAIKAGARTINIPDTVGYTIPSEFGGIIETLFNRVPNIDQAIISVHCHDDLGLSVANSITAVQQGARQIECTVNGIGERAGNCSLEEIAMILSTRKDSLGLETGINAKEIHRTSNLVSQLCNMPVQANKAIVGANAFTHSSGIHQDGMLKSQNTYEIMTPESIGLHRNNLNMTSRSGRHVIKHRMEEMGYGNKDYDMDTLYEAFLQLADKKGQVFDYDLEALAFMEAQVDEEADYKLAQLVVHSDSTEGNATATVKLEIDGKTVTEAATGNGPVDAAYNAIARASQCEVNITSYKLSAKGEGQNALGQVDIEANYNEQSFHGVGLATDVVEASVQALVHVMNLTSRADKVADCKEKIQKDRSELGGV.

The Pyruvate carboxyltransferase domain occupies 5–267; the sequence is VIIFDTTLRD…ETGINAKEIH (263 aa). Positions 14, 202, 204, and 238 each coordinate Mn(2+). The tract at residues 392-523 is regulatory domain; that stretch reads KLAQLVVHSD…QKDRSELGGV (132 aa).

The protein belongs to the alpha-IPM synthase/homocitrate synthase family. LeuA type 1 subfamily. As to quaternary structure, homodimer. Mn(2+) is required as a cofactor.

It localises to the cytoplasm. It catalyses the reaction 3-methyl-2-oxobutanoate + acetyl-CoA + H2O = (2S)-2-isopropylmalate + CoA + H(+). The protein operates within amino-acid biosynthesis; L-leucine biosynthesis; L-leucine from 3-methyl-2-oxobutanoate: step 1/4. Functionally, catalyzes the condensation of the acetyl group of acetyl-CoA with 3-methyl-2-oxobutanoate (2-ketoisovalerate) to form 3-carboxy-3-hydroxy-4-methylpentanoate (2-isopropylmalate). The polypeptide is 2-isopropylmalate synthase (Shewanella sediminis (strain HAW-EB3)).